We begin with the raw amino-acid sequence, 119 residues long: Large ribosomal subunit protein uL18 (119 aa).

Residues 1-20 (MSQIDKASRRQKIKDRSRVK) are disordered. Positions 9-20 (RRQKIKDRSRVK) are enriched in basic residues.

Belongs to the universal ribosomal protein uL18 family. As to quaternary structure, part of the 50S ribosomal subunit; part of the 5S rRNA/L5/L18/L25 subcomplex. Contacts the 5S and 23S rRNAs.

Functionally, this is one of the proteins that bind and probably mediate the attachment of the 5S RNA into the large ribosomal subunit, where it forms part of the central protuberance. This chain is Large ribosomal subunit protein uL18, found in Chlorobium phaeobacteroides (strain DSM 266 / SMG 266 / 2430).